The primary structure comprises 367 residues: Alanine racemase (367 aa).

Lys-35 functions as the Proton acceptor; specific for D-alanine in the catalytic mechanism. Lys-35 is subject to N6-(pyridoxal phosphate)lysine. Arg-130 contacts substrate. Residue Tyr-259 is the Proton acceptor; specific for L-alanine of the active site. Position 307 (Met-307) interacts with substrate.

Belongs to the alanine racemase family. Pyridoxal 5'-phosphate serves as cofactor.

The catalysed reaction is L-alanine = D-alanine. It functions in the pathway amino-acid biosynthesis; D-alanine biosynthesis; D-alanine from L-alanine: step 1/1. Functionally, catalyzes the interconversion of L-alanine and D-alanine. May also act on other amino acids. This Delftia acidovorans (strain DSM 14801 / SPH-1) protein is Alanine racemase (alr).